The following is a 580-amino-acid chain: Double-stranded RNA-binding protein Staufen homolog 1 (580 aa).

An N-acetylserine modification is found at Ser2. The span at 34 to 44 (SIPSTTSSLPS) shows a compositional bias: polar residues. A disordered region spans residues 34 to 59 (SIPSTTSSLPSENAGRPIQNSALPSA). One can recognise a DRBM 1 domain in the interval 72-162 (TPTVELNALC…AAKALRTLQS (91 aa)). Arg108 is subject to Asymmetric dimethylarginine. Arg115 carries the asymmetric dimethylarginine; alternate modification. Residue Arg115 is modified to Omega-N-methylarginine; alternate. Positions 158–189 (RTLQSEPLPERPEGRRPGEQVNGRESEEENLN) are disordered. The segment covering 165–182 (LPERPEGRRPGEQVNGRE) has biased composition (basic and acidic residues). Ser183 carries the phosphoserine modification. Positions 191 to 258 (SEISQVFEIA…AIAVLEELKK (68 aa)) constitute a DRBM 2 domain. Ser285 is modified (phosphoserine). One can recognise a DRBM 3 domain in the interval 293–361 (NPISRLAQIQ…AENMLEILGF (69 aa)). The tract at residues 367-404 (QPTKPALKSEEKTPIKKPGDGRKVTFFEPGSGDENGTS) is disordered. Residues 373-391 (LKSEEKTPIKKPGDGRKVT) show a composition bias toward basic and acidic residues. A Phosphoserine modification is found at Ser397.

Binds tubulin. Binds with low affinity single-stranded RNA or DNA homopolymers. Interacts with CASC3 in an RNA-dependent manner. Identified in a mRNP complex, at least composed of DHX9, DDX3X, ELAVL1, HNRNPU, IGF2BP1, ILF3, PABPC1, PCBP2, PTBP2, STAU1, STAU2, SYNCRIP and YBX1. Interacts with the influenza virus nonstructural protein NS1.

The protein localises to the cytoplasm. The protein resides in the rough endoplasmic reticulum. Functionally, binds double-stranded RNA (regardless of the sequence) and tubulin. May play a role in specific positioning of mRNAs at given sites in the cell by cross-linking cytoskeletal and RNA components, and in stimulating their translation at the site. The sequence is that of Double-stranded RNA-binding protein Staufen homolog 1 (STAU1) from Ailuropoda melanoleuca (Giant panda).